A 111-amino-acid chain; its full sequence is Distal membrane-arm assembly complex protein 1 (111 aa).

Polar residues predominate over residues 1 to 11 (MGSSFSGSTEF). Residues 1-40 (MGSSFSGSTEFSAPAPPTVSTAVPANPPAKSAVPASPARD) form a disordered region. Residues 18 to 38 (TVSTAVPANPPAKSAVPASPA) are compositionally biased toward low complexity. 2 consecutive transmembrane segments (helical) span residues 51–68 (VLSGSTLFGAGTYVYLVA) and 81–101 (GTVLQMVIGISIACWGVVVLV).

As to quaternary structure, interacts with incompletely assembled mitochondrial NADH:ubiquinone oxidoreductase complex (complex I).

It is found in the mitochondrion inner membrane. Functionally, required for the assembly of the mitochondrial NADH:ubiquinone oxidoreductase complex (complex I). Involved in the assembly of the distal region of complex I. The protein is Distal membrane-arm assembly complex protein 1 of Mus musculus (Mouse).